The chain runs to 164 residues: HTH-type transcriptional regulator IscR (164 aa).

One can recognise an HTH rrf2-type domain in the interval 2 to 131 (RLTSKGRYAV…NNITLAELVN (130 aa)). The H-T-H motif DNA-binding region spans 28–51 (LADISERQGISLSYLEQLFSRLRK). [2Fe-2S] cluster is bound by residues Cys92, Cys98, and Cys104. The disordered stretch occupies residues 143-164 (NNDTRRTANGRPQETINVNLRA). Over residues 152-164 (GRPQETINVNLRA) the composition is skewed to polar residues.

[2Fe-2S] cluster serves as cofactor.

Its function is as follows. Regulates the transcription of several operons and genes involved in the biogenesis of Fe-S clusters and Fe-S-containing proteins. This Yersinia pseudotuberculosis serotype O:1b (strain IP 31758) protein is HTH-type transcriptional regulator IscR.